Consider the following 988-residue polypeptide: Voltage-gated delayed rectifier potassium channel KCNH5 (988 aa).

Residues 1 to 217 lie on the Cytoplasmic side of the membrane; that stretch reads MPGGKRGLVA…LHYCAFKTTW (217 aa). Residues 12–90 enclose the PAS domain; that stretch reads QNTFLENIVR…VRQTFDNYES (79 aa). In terms of domain architecture, PAC spans 91–143; it reads NCFEVLLYKKNRTPVWFYMQIAPIRNEHEKVVLFLCTFKDITLFKQPIEDDST. A helical transmembrane segment spans residues 218–238; the sequence is DWVILILTFYTAIMVPYNVSF. Over 239–243 the chain is Extracellular; the sequence is KTKQN. Residues 244–264 traverse the membrane as a helical segment; that stretch reads NIAWLVLDSVVDVIFLVDIVL. Topologically, residues 265–291 are cytoplasmic; it reads NFHTTFVGPGGEVISDPKLIRMNYLKT. The chain crosses the membrane as a helical span at residues 292–312; it reads WFVIDLLSCLPYDIINAFENV. Residues 313–319 are Extracellular-facing; that stretch reads DEGISSL. Residues 320 to 340 form a helical; Voltage-sensor membrane-spanning segment; that stretch reads FSSLKVVRLLRLGRVARKLDH. Over 341 to 346 the chain is Cytoplasmic; that stretch reads YLEYGA. A helical membrane pass occupies residues 347 to 367; the sequence is AVLVLLVCVFGLVAHWLACIW. Residues 368–419 lie on the Extracellular side of the membrane; the sequence is YSIGDYEVIDEVTNTIQIDSWLYQLALSIGTPYRYNTSAGIWEGGPSKDSLY. N-linked (GlcNAc...) asparagine glycosylation occurs at N403. An intramembrane region (pore-forming) is located at residues 420-440; the sequence is VSSLYFTMTSLTTIGFGNIAP. Positions 432 to 437 match the Selectivity filter motif; sequence TIGFGN. Over 441-446 the chain is Extracellular; that stretch reads TTDVEK. The chain crosses the membrane as a helical span at residues 447–467; it reads MFSVAMMMVGSLLYATIFGNV. Over 468–988 the chain is Cytoplasmic; it reads TTIFQQMYAN…PESDKDEIHF (521 aa). 550 to 667 contacts a nucleoside 3',5'-cyclic phosphate; sequence AFRLASDGCL…NSFSRNLTLT (118 aa). The calmodulin-binding stretch occupies residues 704–715; that stretch reads HPVRKLFQKFKQ. The interval 717-742 is disordered; it reads KELRNQGSTQGDPERNQLQVESRSLQ. Positions 721 to 742 are enriched in polar residues; that stretch reads NQGSTQGDPERNQLQVESRSLQ. K785 participates in a covalent cross-link: Glycyl lysine isopeptide (Lys-Gly) (interchain with G-Cter in ubiquitin). The segment at 838 to 890 is disordered; sequence GLLSEDPKSSDSENSVTKNPLRKTDSCDSGITKSDLRLDKAGEARSPLEHSPI. Residues 871-885 are compositionally biased toward basic and acidic residues; the sequence is SDLRLDKAGEARSPL. A Phosphoserine modification is found at S883. Residues 909–948 form a CAD (involved in subunit assembly) region; that stretch reads TLQEVKHELKEDIQLLSCRMTALEKQVAEILKILSEKSVP. The interval 969–988 is disordered; that stretch reads DIFSVSRPESPESDKDEIHF. Basic and acidic residues predominate over residues 977 to 988; that stretch reads ESPESDKDEIHF.

The protein belongs to the potassium channel family. H (Eag) (TC 1.A.1.20) subfamily. Kv10.2/KCNH5 sub-subfamily. As to quaternary structure, homotetramer. The potassium channel is probably composed of a homo- or heterotetrameric complex of pore-forming alpha subunits that can associate with modulating beta subunits. Heteromultimer with KCNH1/EAG. In terms of tissue distribution, detected in brain, skeletal muscle, heart, placenta, lung and liver, and at low levels in kidney.

It localises to the membrane. It catalyses the reaction K(+)(in) = K(+)(out). Pore-forming (alpha) subunit of a voltage-gated delayed rectifier potassium channel that mediates outward-rectifying potassium currents which, on depolarization, reaches a steady-state level and do not inactivate. The kinetic is characterized by a slow activation time course and a small voltage dependence of the activation time constants, therefore, starts to open at more negative voltages. The activation kinetics depend on the prepulse potential and external divalent cation concentration. The time course of activation is biphasic with a fast and a slowly activating current component. With negative prepulses, the current activation is delayed and slowed down several fold, whereas more positive prepulses speed up activation, therefore the activation rate depends on holding potential. The protein is Voltage-gated delayed rectifier potassium channel KCNH5 of Homo sapiens (Human).